Consider the following 231-residue polypeptide: Urease accessory protein UreF (231 aa).

The protein belongs to the UreF family. As to quaternary structure, ureD, UreF and UreG form a complex that acts as a GTP-hydrolysis-dependent molecular chaperone, activating the urease apoprotein by helping to assemble the nickel containing metallocenter of UreC. The UreE protein probably delivers the nickel.

The protein resides in the cytoplasm. Functionally, required for maturation of urease via the functional incorporation of the urease nickel metallocenter. The protein is Urease accessory protein UreF of Magnetococcus marinus (strain ATCC BAA-1437 / JCM 17883 / MC-1).